A 1256-amino-acid polypeptide reads, in one-letter code: Nephrin (1256 aa).

The N-terminal stretch at 1–35 (MGAKEATVRGPGASPVHRTCHLIPLLLAGMLTTGL) is a signal peptide. The Extracellular portion of the chain corresponds to 36–1078 (AQSPVPTSAP…PGPPRLPLLP (1043 aa)). Ig-like C2-type domains follow at residues 39–144 (PVPT…VILS), 149–247 (PKVL…ASFT), 256–347 (PPVI…RSIT), 354–448 (PSAV…KSLT), 454–554 (PAQK…TQLV), and 558–649 (PPTN…ETVS). N-linked (GlcNAc...) asparagine glycosylation is present at asparagine 54. Disulfide bonds link cysteine 67/cysteine 125, cysteine 174/cysteine 231, and cysteine 279/cysteine 331. N-linked (GlcNAc...) asparagine glycosylation is found at asparagine 370 and asparagine 415. Residues cysteine 375 and cysteine 431 are joined by a disulfide bond. Serine 446 is modified (phosphoserine). An intrachain disulfide couples cysteine 479 to cysteine 542. The tract at residues 491 to 516 (TWLKDSRPVNDPRQSQEPRRVQLGSV) is disordered. Residues 494–510 (KDSRPVNDPRQSQEPRR) are compositionally biased toward basic and acidic residues. Residues asparagine 561, asparagine 578, asparagine 591, and asparagine 722 are each glycosylated (N-linked (GlcNAc...) asparagine). A disulfide bridge links cysteine 581 with cysteine 637. 2 consecutive Ig-like C2-type domains span residues 754–846 (PTIR…LVRL) and 852–953 (PQVD…VSIS). 2 disulfide bridges follow: cysteine 775–cysteine 830 and cysteine 877–cysteine 934. Residues 957 to 1051 (PPLGLKVVSV…GIQVSITTPG (95 aa)) enclose the Fibronectin type-III domain. Residues 1048 to 1071 (TTPGLDQAPEDTDQPLPTEQPPGP) form a disordered region. A helical transmembrane segment spans residues 1079 to 1099 (VLFAVGGLLLLSNASCVGGLL). The Cytoplasmic portion of the chain corresponds to 1100–1256 (WRRRLRRLAE…LPFELRGHLV (157 aa)). Serine 1112 bears the Phosphoserine mark. Over residues 1112–1128 (SEKTEAGSEEDRIRNEY) the composition is skewed to basic and acidic residues. Residues 1112–1143 (SEKTEAGSEEDRIRNEYEESQWTGDRDTRSST) are disordered. Threonine 1115 is subject to Phosphothreonine. Phosphoserine is present on serine 1119. Position 1208 is a phosphotyrosine; by FYN (tyrosine 1208).

This sequence belongs to the immunoglobulin superfamily. As to quaternary structure, interacts with NPHS2 and with CD2AP (via C-terminal domain). Interacts with MAGI1 (via PDZ 2 and 3 domains) forming a tripartite complex with IGSF5/JAM4. Forms a complex with ACTN4, CASK, IQGAP1, MAGI2, SPTAN1 and SPTBN1. Interacts with DDN; the interaction is direct. Self-associates (via the Ig-like domains). Also interacts (via the Ig-like domains) with KIRREL1 and KIRREL2; the interaction with KIRREL1 is dependent on KIRREL1 glycosylation. Interacts with KIRREL3. Interacts with phosphatidylinositol 3-kinase regulatory subunit PIK3R1; the interaction is reduced by high glucose levels. Phosphorylated at Tyr-1208 by FYN, leading to the recruitment and activation of phospholipase C-gamma-1/PLCG1. Tyrosine phosphorylation is reduced by high glucose levels. Dephosphorylated by tensin TNS2 which leads to reduced binding of NPHN1 to PIK3R1. Expressed in kidney glomeruli. In the embryo, expressed in the mesonephric kidney at 11 dpc with strong expression in cranial tubules with podocyte-like structures. Expression is observed in the podocytes of the developing kidney from 13 dpc. High expression is also detected in the developing cerebellum, hindbrain, spinal cord, retina and hypothalamus. Expressed in skeletal muscle during myoblast fusion such as in the adult following acute injury and in the embryo but not detected in uninjured adult skeletal muscle. Isoform 1 and isoform 2 are expressed in the newborn brain and developing cerebellum. Isoform 1 is the predominant isoform in adult kidney.

The protein localises to the cell membrane. Its function is as follows. Seems to play a role in the development or function of the kidney glomerular filtration barrier. Regulates glomerular vascular permeability. May anchor the podocyte slit diaphragm to the actin cytoskeleton. Plays a role in skeletal muscle formation through regulation of myoblast fusion. The chain is Nephrin (Nphs1) from Mus musculus (Mouse).